The primary structure comprises 204 residues: Peptide deformylase (204 aa).

Fe cation-binding residues include cysteine 131 and histidine 174. Glutamate 175 is a catalytic residue. Histidine 178 serves as a coordination point for Fe cation.

It belongs to the polypeptide deformylase family. It depends on Fe(2+) as a cofactor.

The catalysed reaction is N-terminal N-formyl-L-methionyl-[peptide] + H2O = N-terminal L-methionyl-[peptide] + formate. Removes the formyl group from the N-terminal Met of newly synthesized proteins. Requires at least a dipeptide for an efficient rate of reaction. N-terminal L-methionine is a prerequisite for activity but the enzyme has broad specificity at other positions. The chain is Peptide deformylase from Streptococcus thermophilus (strain CNRZ 1066).